The sequence spans 217 residues: MLLIYGIFAFVVLVFFYLLGKETGGEMEEEYRLREYLEVLKNRNVVILSVIAFIGVGIFTAYLTWVEPVLEEHGLTVETAGLTATAFLLGGIFGSIIIPALSDRAGKRKPFLYLCFIISAVLFYIHAIAFGMAMVAAVLFVLGFFFISALPLALDLSATSVGEQFAGTANSSLWLFSQVGSVVLIVLFESMASWNSTLLLSAGLLAVSFLLALQLKE.

A run of 7 helical transmembrane segments spans residues 4 to 23 (IYGI…GKET), 44 to 66 (NVVI…LTWV), 76 to 98 (TVET…SIII), 111 to 128 (FLYL…IHAI), 132 to 154 (MAMV…PLAL), 166 to 188 (AGTA…IVLF), and 198 to 215 (LLLS…ALQL).

The protein localises to the cell membrane. This is an uncharacterized protein from Archaeoglobus fulgidus (strain ATCC 49558 / DSM 4304 / JCM 9628 / NBRC 100126 / VC-16).